Consider the following 83-residue polypeptide: Cytochrome b559 subunit alpha (83 aa).

Residues 21–35 (VIHSITIPSLFIAGW) form a helical membrane-spanning segment. His-23 contributes to the heme binding site.

This sequence belongs to the PsbE/PsbF family. As to quaternary structure, heterodimer of an alpha subunit and a beta subunit. PSII is composed of 1 copy each of membrane proteins PsbA, PsbB, PsbC, PsbD, PsbE, PsbF, PsbH, PsbI, PsbJ, PsbK, PsbL, PsbM, PsbT, PsbX, PsbY, PsbZ, Psb30/Ycf12, at least 3 peripheral proteins of the oxygen-evolving complex and a large number of cofactors. It forms dimeric complexes. It depends on heme b as a cofactor.

The protein resides in the plastid. It is found in the chloroplast thylakoid membrane. Functionally, this b-type cytochrome is tightly associated with the reaction center of photosystem II (PSII). PSII is a light-driven water:plastoquinone oxidoreductase that uses light energy to abstract electrons from H(2)O, generating O(2) and a proton gradient subsequently used for ATP formation. It consists of a core antenna complex that captures photons, and an electron transfer chain that converts photonic excitation into a charge separation. This chain is Cytochrome b559 subunit alpha, found in Adiantum capillus-veneris (Maidenhair fern).